The primary structure comprises 379 residues: 3-dehydroquinate synthase (379 aa).

NAD(+)-binding positions include 67 to 72, 101 to 105, 125 to 126, Lys-138, and Lys-147; these read PGEKNK, GIVLD, and TT. 3 residues coordinate Zn(2+): Glu-180, His-242, and His-258.

The protein belongs to the sugar phosphate cyclases superfamily. Dehydroquinate synthase family. Requires NAD(+) as cofactor. The cofactor is Co(2+). Zn(2+) serves as cofactor.

The protein resides in the cytoplasm. It catalyses the reaction 7-phospho-2-dehydro-3-deoxy-D-arabino-heptonate = 3-dehydroquinate + phosphate. The protein operates within metabolic intermediate biosynthesis; chorismate biosynthesis; chorismate from D-erythrose 4-phosphate and phosphoenolpyruvate: step 2/7. Functionally, catalyzes the conversion of 3-deoxy-D-arabino-heptulosonate 7-phosphate (DAHP) to dehydroquinate (DHQ). The sequence is that of 3-dehydroquinate synthase from Chlamydia felis (strain Fe/C-56) (Chlamydophila felis).